Consider the following 270-residue polypeptide: Putative phosphoenolpyruvate synthase regulatory protein (270 aa).

150–157 (GVSRCGKT) is an ADP binding site.

Belongs to the pyruvate, phosphate/water dikinase regulatory protein family. PSRP subfamily.

It carries out the reaction [pyruvate, water dikinase] + ADP = [pyruvate, water dikinase]-phosphate + AMP + H(+). The enzyme catalyses [pyruvate, water dikinase]-phosphate + phosphate + H(+) = [pyruvate, water dikinase] + diphosphate. Its function is as follows. Bifunctional serine/threonine kinase and phosphorylase involved in the regulation of the phosphoenolpyruvate synthase (PEPS) by catalyzing its phosphorylation/dephosphorylation. This is Putative phosphoenolpyruvate synthase regulatory protein from Shewanella denitrificans (strain OS217 / ATCC BAA-1090 / DSM 15013).